Consider the following 634-residue polypeptide: Probable potassium transport system protein Kup (634 aa).

12 helical membrane passes run 21–41 (LVIG…LYTL), 58–78 (VLGI…LKYV), 110–130 (MYVV…DGVI), 147–167 (APKL…MLFL), 179–199 (AFGP…VYNM), 223–243 (WHAV…EALY), 258–278 (WQFV…ALVL), 296–316 (ALYP…QALI), 348–368 (IYVP…VIGF), 377–397 (AYGV…IIYA), 403–423 (VPAP…CAFF), and 427–447 (IIKF…LFTL).

The protein belongs to the HAK/KUP transporter (TC 2.A.72) family.

It localises to the cell inner membrane. The enzyme catalyses K(+)(in) + H(+)(in) = K(+)(out) + H(+)(out). Its function is as follows. Transport of potassium into the cell. Likely operates as a K(+):H(+) symporter. This Xanthomonas axonopodis pv. citri (strain 306) protein is Probable potassium transport system protein Kup.